The following is a 238-amino-acid chain: Ribonuclease PH (238 aa).

Phosphate-binding positions include Arg-86 and 124–126 (GTR).

This sequence belongs to the RNase PH family. Homohexameric ring arranged as a trimer of dimers.

It carries out the reaction tRNA(n+1) + phosphate = tRNA(n) + a ribonucleoside 5'-diphosphate. Its function is as follows. Phosphorolytic 3'-5' exoribonuclease that plays an important role in tRNA 3'-end maturation. Removes nucleotide residues following the 3'-CCA terminus of tRNAs; can also add nucleotides to the ends of RNA molecules by using nucleoside diphosphates as substrates, but this may not be physiologically important. Probably plays a role in initiation of 16S rRNA degradation (leading to ribosome degradation) during starvation. In Haemophilus ducreyi (strain 35000HP / ATCC 700724), this protein is Ribonuclease PH.